Consider the following 459-residue polypeptide: Putative BTB/POZ domain-containing protein R541 (459 aa).

A BTB domain is found at Asn76 to Tyr143.

It belongs to the mimivirus BTB/WD family.

The sequence is that of Putative BTB/POZ domain-containing protein R541 from Acanthamoeba polyphaga mimivirus (APMV).